The following is a 136-amino-acid chain: Large ribosomal subunit protein uL16 (136 aa).

The protein belongs to the universal ribosomal protein uL16 family. Part of the 50S ribosomal subunit.

In terms of biological role, binds 23S rRNA and is also seen to make contacts with the A and possibly P site tRNAs. This Enterobacter sp. (strain 638) protein is Large ribosomal subunit protein uL16.